The sequence spans 455 residues: MSSPIQEQVQKEKRSNIPSISEMKVIPVAGHDSMLLNLSGAHSPFFTRNIVILTDSSGNQGVGEVPGGEHIRRTLELSEPLVVGKSIGAYQAILQTVRKQFGDQDRGGRGNQTFDLRTTVHAVTALEAALLDLLGKFLQEPVAALLGEGKQRDEVKMLGYLFYIGDRNRTTLPYQSDEQSDCAWFRLRHEEALTPEAIVRLAESAQERYGFQDFKLKGGVLRGEEEIEAVTALSKRFPEARITLDPNGAWSLEEAIALCKGKQDVLAYAEDPCGDENGYSAREVMAEFRRATGLPTATNMIATDWREMGHAIQLHAVDIPLADPHFWTMQGSVRVAQMCHDWGLTWGSHSNNHFDISLAMFTHVAAAAPGRITAIDTHWIWQDGQRLTKQPFEISSGCVKVPDKPGLGVDIDMEQVEKAHEIYRKMNLGARNDAIPMQFLISNWEFDRKRPCLVR.

His42, Thr113, Tyr160, and Lys215 together coordinate substrate. Catalysis depends on Lys217, which acts as the Proton acceptor. The Mg(2+) site is built by Asp245, Glu276, and Asn299. 245–247 (DPN) lines the substrate pocket. Substrate-binding positions include Asn299, 349-351 (HSN), His378, and Arg431. His349 (proton acceptor) is an active-site residue.

The protein belongs to the mandelate racemase/muconate lactonizing enzyme family. GlucD subfamily. It depends on Mg(2+) as a cofactor.

It carries out the reaction D-glucarate = 5-dehydro-4-deoxy-D-glucarate + H2O. It functions in the pathway carbohydrate acid metabolism; D-glucarate degradation; 2,5-dioxopentanoate from D-glucarate: step 1/2. Catalyzes the dehydration of glucarate to 5-keto-4-deoxy-D-glucarate (5-kdGluc). The sequence is that of Probable glucarate dehydratase (gudD) from Bacillus subtilis (strain 168).